The following is a 67-amino-acid chain: Small ribosomal subunit protein eS27 (67 aa).

Positions 22, 25, 41, and 44 each coordinate Zn(2+). The C4-type zinc-finger motif lies at 22-44; that stretch reads CPDCGNEQVVFSHAAMVVRCLVC.

This sequence belongs to the eukaryotic ribosomal protein eS27 family. As to quaternary structure, part of the 30S ribosomal subunit. Requires Zn(2+) as cofactor.

The polypeptide is Small ribosomal subunit protein eS27 (Pyrobaculum islandicum (strain DSM 4184 / JCM 9189 / GEO3)).